The sequence spans 499 residues: Serine/threonine-protein kinase RHS3 (499 aa).

The tract at residues Met-1 to Asp-92 is disordered. The span at Gln-39–Lys-55 shows a compositional bias: basic and acidic residues. Positions Ser-63–Ser-85 are enriched in low complexity. Residues Phe-113–Phe-436 enclose the Protein kinase domain. ATP-binding positions include Leu-119–Val-127 and Lys-144. Asp-240 (proton acceptor) is an active-site residue. Residues Glu-437–Phe-499 enclose the AGC-kinase C-terminal domain.

The protein belongs to the protein kinase superfamily. AGC Ser/Thr protein kinase family. In terms of assembly, interacts with PDPK1/PDK1. Autophosphorylated and phosphorylated by PDPK1/PDK1. In terms of tissue distribution, specifically expressed in root hair cells.

It carries out the reaction L-seryl-[protein] + ATP = O-phospho-L-seryl-[protein] + ADP + H(+). It catalyses the reaction L-threonyl-[protein] + ATP = O-phospho-L-threonyl-[protein] + ADP + H(+). With respect to regulation, activated by PDPK1/PDK1. Its function is as follows. Involved in root hair growth and morphogenesis. This chain is Serine/threonine-protein kinase RHS3, found in Arabidopsis thaliana (Mouse-ear cress).